The primary structure comprises 257 residues: Snake venom serine protease KN2 (257 aa).

A signal peptide spans 1–18 (MVLIRVLANLLILQLSYA). The propeptide occupies 19 to 24 (QKSSEL). In terms of domain architecture, Peptidase S1 spans 25–248 (VIGGHPCNIN…HLDWIKSIIA (224 aa)). Disulfide bonds link Cys31–Cys162, Cys49–Cys65, Cys97–Cys255, Cys141–Cys209, Cys173–Cys188, and Cys199–Cys224. Active-site charge relay system residues include His64 and Asp109. N-linked (GlcNAc...) asparagine glycosylation is found at Asn120 and Asn121. Catalysis depends on Ser203, which acts as the Charge relay system.

It belongs to the peptidase S1 family. Snake venom subfamily. In terms of assembly, monomer. In terms of tissue distribution, expressed by the venom gland.

The protein localises to the secreted. Snake venom serine protease that may act in the hemostasis system of the prey. This chain is Snake venom serine protease KN2, found in Trimeresurus stejnegeri (Chinese green tree viper).